The sequence spans 348 residues: Lipooligosaccharide heptosyltransferase 2 (348 aa).

The protein belongs to the glycosyltransferase 9 family.

The enzyme catalyses an L-alpha-D-Hep-(1-&gt;5)-[alpha-Kdo-(2-&gt;4)]-alpha-Kdo-(2-&gt;6)-lipid A + ADP-L-glycero-beta-D-manno-heptose = an L-alpha-D-Hep-(1-&gt;3)-L-alpha-D-Hep-(1-&gt;5)-[alpha-Kdo-(2-&gt;4)]-alpha-Kdo-(2-&gt;6)-lipid A + ADP + H(+). It functions in the pathway bacterial outer membrane biogenesis; LOS core biosynthesis. Glycosyltransferase involved in the biosynthesis of the core oligosaccharide region of lipooligosaccharide (LOS). Catalyzes the addition of a heptose unit to the heptosyl-Kdo2-lipid A module. The sequence is that of Lipooligosaccharide heptosyltransferase 2 from Haemophilus ducreyi (strain 35000HP / ATCC 700724).